The sequence spans 101 residues: Iron-sulfur cluster assembly protein CyaY (101 aa).

This sequence belongs to the frataxin family.

Involved in iron-sulfur (Fe-S) cluster assembly. May act as a regulator of Fe-S biogenesis. The sequence is that of Iron-sulfur cluster assembly protein CyaY from Actinobacillus pleuropneumoniae serotype 7 (strain AP76).